The primary structure comprises 406 residues: MARTEVSGKDRLSDLPCHLLCRILSNLSTKESVRTSVLSPRWSNLWSLVSVLDLDFQDFKGEHDMGEFIDSFMEYHEELGLKLKSFNMFYDANEHLHEPFVRRLNKVVRRGVCDLNIQNMVDVDVALVRMPPSLYSCATLVNLILYCVVFDHPRSKSVSLPSVKKMYFEGVKFDGDSVLETLISHSPVLEELTVIPHPEDYLEVICVRSQSLESFRLESKRFECDNPKVEIDSPSLEFMSICDKKPESLKIHRIGPFAEVTVDVEFDVEDDDPLEISKIRKFLVGLSTFHELTISARTLESIHDYSKVGPLPPFSNLFGLDASLVESSWEVLPAFLSCCMNLDSLVIELDCVPEMEEIKLSPVPQCVLSSLDFLQLKAPSTPSKMKLATYFRKKCTRLTKMLLSGQ.

The 51-residue stretch at 9-59 (KDRLSDLPCHLLCRILSNLSTKESVRTSVLSPRWSNLWSLVSVLDLDFQDF) folds into the F-box domain. Positions 355–405 (MEEIKLSPVPQCVLSSLDFLQLKAPSTPSKMKLATYFRKKCTRLTKMLLSG) constitute an FBD domain.

The sequence is that of FBD-associated F-box protein At1g60410 from Arabidopsis thaliana (Mouse-ear cress).